We begin with the raw amino-acid sequence, 359 residues long: MTAWRTLATQVLNGTPLSSSQALDVVHADDDEVLALLDAAFRVRRHHHGRRVRIHVLQNAKSGVCPEDCAFCSQSLKFDSDPEQYGMQQVDQIVEGAKAAWDKGAVTYCIVTATRGPHSSEVDVVCEATRRIKETYPMDVCASLGLLDAKQARKLADAGVDRYNHNLETSCDHFGNVVTTHEWSDRVETVKQAKAAGMEACCGGIIGLGEARADWVDLALALREIGVESVPVNFLNPRSGTPLEDVDTVRPQDCLKALAMFRLVHPEADLRMAGGREVVLDQMQPLALYAANSFFTDGYLTTGGQGESKDYRMIQQAGFEPVIVEDGPERQTPATADDTPSGDPEAADRRRQPSAGPAG.

The Radical SAM core domain occupies 47–276 (HHGRRVRIHV…EADLRMAGGR (230 aa)). Residues Cys65, Cys69, and Cys72 each coordinate [4Fe-4S] cluster. [2Fe-2S] cluster-binding residues include Cys109, Cys141, Cys201, and Arg271. Residues 320–359 (EPVIVEDGPERQTPATADDTPSGDPEAADRRRQPSAGPAG) form a disordered region.

The protein belongs to the radical SAM superfamily. Biotin synthase family. In terms of assembly, homodimer. The cofactor is [4Fe-4S] cluster. [2Fe-2S] cluster serves as cofactor.

The catalysed reaction is (4R,5S)-dethiobiotin + (sulfur carrier)-SH + 2 reduced [2Fe-2S]-[ferredoxin] + 2 S-adenosyl-L-methionine = (sulfur carrier)-H + biotin + 2 5'-deoxyadenosine + 2 L-methionine + 2 oxidized [2Fe-2S]-[ferredoxin]. The protein operates within cofactor biosynthesis; biotin biosynthesis; biotin from 7,8-diaminononanoate: step 2/2. Catalyzes the conversion of dethiobiotin (DTB) to biotin by the insertion of a sulfur atom into dethiobiotin via a radical-based mechanism. The polypeptide is Biotin synthase (Salinibacter ruber (strain DSM 13855 / M31)).